The following is a 154-amino-acid chain: Endoribonuclease YbeY (154 aa).

Zn(2+)-binding residues include His113, His117, and His123.

Belongs to the endoribonuclease YbeY family. Requires Zn(2+) as cofactor.

It is found in the cytoplasm. Single strand-specific metallo-endoribonuclease involved in late-stage 70S ribosome quality control and in maturation of the 3' terminus of the 16S rRNA. The chain is Endoribonuclease YbeY from Anaplasma marginale (strain Florida).